Here is a 299-residue protein sequence, read N- to C-terminus: 4-diphosphocytidyl-2-C-methyl-D-erythritol kinase (299 aa).

The active site involves lysine 19. 110–120 is a binding site for ATP; it reads PVASGIGGGSA. Aspartate 152 is a catalytic residue.

It belongs to the GHMP kinase family. IspE subfamily.

It catalyses the reaction 4-CDP-2-C-methyl-D-erythritol + ATP = 4-CDP-2-C-methyl-D-erythritol 2-phosphate + ADP + H(+). The protein operates within isoprenoid biosynthesis; isopentenyl diphosphate biosynthesis via DXP pathway; isopentenyl diphosphate from 1-deoxy-D-xylulose 5-phosphate: step 3/6. Its function is as follows. Catalyzes the phosphorylation of the position 2 hydroxy group of 4-diphosphocytidyl-2C-methyl-D-erythritol. The polypeptide is 4-diphosphocytidyl-2-C-methyl-D-erythritol kinase (Agrobacterium fabrum (strain C58 / ATCC 33970) (Agrobacterium tumefaciens (strain C58))).